A 3926-amino-acid polypeptide reads, in one-letter code: Protein bassoon (3926 aa).

Residues 1-161 (MGNEVSLEGG…PTSPYSVPQI (161 aa)) form a disordered region. Residue G2 is the site of N-myristoyl glycine attachment. Pro residues-rich tracts occupy residues 15–30 (PLPP…PGPG) and 58–72 (PPVP…PGPG). The tract at residues 23 to 32 (PGPGPGPGPG) is 5 X 2 AA tandem repeats of P-G. Positions 61–74 (PGPGPGPGPGPGPG) are 7 X 2 AA tandem repeats of P-G. Polar residues-rich tracts occupy residues 90 to 105 (RAAS…TTPG) and 130 to 157 (QVDS…SPYS). The residue at position 145 (S145) is a Phosphoserine. An Omega-N-methylarginine modification is found at R148. 2 C4-type zinc fingers span residues 170-193 (CPIC…CTQC) and 198-220 (CNQC…CLNC). Disordered stretches follow at residues 231 to 343 (TTAP…EQTQ) and 366 to 459 (SVQP…KTMP). Positions 233-243 (APRSKSQQQLH) are enriched in polar residues. S244 and S248 each carry phosphoserine. Over residues 366 to 377 (SVQPEADTQGQP) the composition is skewed to polar residues. C4-type zinc fingers lie at residues 465–488 (CPLC…CTTC) and 493–515 (CNLC…CLNC). 2 disordered regions span residues 524–927 (SLGE…LQGG) and 940–1248 (GSYG…AEGT). Positions 552–569 (PLKQKGPQGLGQPSGPLP) are enriched in low complexity. 3 tandem repeats follow at residues 571–577 (KASPLST), 578–584 (KASPLPS), and 585–591 (KASPQAK). The interval 571-591 (KASPLSTKASPLPSKASPQAK) is 3 X 7 AA tandem repeats of K-A-S-P-[LQ]-[APS]-[KST]. Over residues 619-631 (MPKPPPETTPTPA) the composition is skewed to pro residues. Residues 671–680 (QDASRSPQSL) are compositionally biased toward polar residues. The span at 681 to 698 (SDTGYSSDGISSSQSEIT) shows a compositional bias: low complexity. Residues 771 to 787 (FDSDEELEDILEEDEDS) show a composition bias toward acidic residues. Positions 788–797 (AEWRRRREQQ) are enriched in basic and acidic residues. Acidic residues predominate over residues 851 to 862 (SAEEDNLEEDDT). Residue R867 is modified to Omega-N-methylarginine. Phosphoserine is present on S970. Low complexity predominate over residues 984 to 1001 (PASTPSYTSGTSPTSLSS). Residues 1037-1092 (IEDSSEEEELREEEELLREQEKMREVEQQRIRSTARKTRRDKEELRAQRRRERSKT) adopt a coiled-coil conformation. Residues 1039 to 1052 (DSSEEEELREEEEL) are compositionally biased toward acidic residues. Phosphoserine is present on residues S1040 and S1041. The segment covering 1053-1066 (LREQEKMREVEQQR) has biased composition (basic and acidic residues). The residue at position 1090 (S1090) is a Phosphoserine. T1092 carries the post-translational modification Phosphothreonine. A phosphoserine mark is found at S1098 and S1104. Residues 1107–1122 (EELRQAAEMEELHRSS) are compositionally biased toward basic and acidic residues. Composition is skewed to low complexity over residues 1123–1133 (CSEYSPSPSLD) and 1163–1180 (SPTE…SGRP). The stretch at 1181-1208 (LKSAEEAYEEMMRKAELLQRQQGQAAGA) forms a coiled coil. Residues 1182–1197 (KSAEEAYEEMMRKAEL) are compositionally biased toward basic and acidic residues. The segment covering 1199–1209 (QRQQGQAAGAR) has biased composition (low complexity). S1226 carries the post-translational modification Phosphoserine. A coiled-coil region spans residues 1276–1294 (RDLAFAEDKKKEKQFLNAE). 2 disordered regions span residues 1298-1547 (MDPM…RLVW) and 1570-1620 (RMVH…RVPS). Residues 1322–1332 (SFSTPTSSDSS) show a composition bias toward low complexity. The O-linked (GlcNAc) threonine glycan is linked to T1343. A compositionally biased stretch (basic and acidic residues) spans 1346–1355 (FAKETQDPLK). Composition is skewed to low complexity over residues 1358-1367 (SSPASPSSAS) and 1377-1392 (GPGT…CPAG). O-linked (GlcNAc) threonine glycosylation is present at T1384. Polar residues predominate over residues 1408–1434 (RSPSPSSTAHSYGHSPTTANYGSQTED). The segment covering 1466–1493 (PSRAYSYFASSSPPLSPSSPSESPTFSP) has biased composition (low complexity). Phosphoserine occurs at positions 1477, 1486, and 1488. Over residues 1570–1598 (RMVHASASTSPLCSPTETQPTTHGYSQTT) the composition is skewed to polar residues. A compositionally biased stretch (pro residues) spans 1606-1616 (PPEPPGPPGFP). 2 positions are modified to omega-N-methylarginine: R1787 and R1791. Residue R1801 is modified to Asymmetric dimethylarginine; alternate. R1801 is modified (omega-N-methylarginine; alternate). R1813 carries the post-translational modification Omega-N-methylarginine. Residues 1924 to 1978 (PEKSMADAAPPGQSSSPFYGPRDPEPPEPPTYRAQGVVGPGPHEEQRPYPQGLPG) form a disordered region. 2 positions are modified to phosphoserine: S1985 and S2041. R2046 and R2076 each carry omega-N-methylarginine. An asymmetric dimethylarginine mark is found at R2250, R2260, and R2266. A disordered region spans residues 2287-2309 (AAKAPGAGGPSRPEMPVGAAREE). Residue T2314 is glycosylated (O-linked (GlcNAc) threonine). Residues 2324–2341 (GAPAPAPLAGQKPPADAA) show a composition bias toward low complexity. Disordered regions lie at residues 2324-2370 (GAPA…KQQE) and 2532-2568 (PSSA…ACEL). Residues 2351-2476 (RPGFEKEEAS…EEQKQRQKAP (126 aa)) are a coiled coil. Over residues 2353-2370 (GFEKEEASQEERQRKQQE) the composition is skewed to basic and acidic residues. The span at 2533-2543 (SSASDMSLQTE) shows a compositional bias: polar residues. Phosphoserine is present on S2570. T2587 and T2614 each carry phosphothreonine. The interval 2601–2655 (RRRARRSADCSVQTDDEDSAEWEQPVRRRRSRLPRHSDSGSDSKHDATASSSSAA) is disordered. Residues 2635–2647 (RHSDSGSDSKHDA) are compositionally biased toward basic and acidic residues. A glycan (O-linked (GlcNAc) threonine) is linked at T2691. The tract at residues 2721 to 3268 (EPDGQAQGVA…PGSSGRPGKE (548 aa)) is interaction with DAO. Phosphoserine occurs at positions 2802, 2851, and 2857. The tract at residues 2845-2865 (TLQRSLSDPKPLSPTAEESAK) is disordered. O-linked (GlcNAc) threonine glycosylation occurs at T2936. Positions 2939 to 2981 (SLLRELDRDLRLVEHESTKLRKKQAELDEEEKEIDAKLKYLEL) form a coiled coil. S3013 carries the post-translational modification Phosphoserine. Positions 3039-3055 (AAAPATPSGPTAFQQPR) are enriched in low complexity. 3 disordered regions span residues 3039–3375 (AAAP…FSPI), 3424–3551 (GMSS…PRAH), and 3572–3897 (EAYH…SVFS). Residues 3083 to 3095 (YPGPSTYPAPAFP) show a composition bias toward pro residues. Low complexity predominate over residues 3165–3176 (ASPVVPMSSAPS). A compositionally biased stretch (polar residues) spans 3205–3228 (SVSQSPAPTYPSDSHYTSLEQNVP). Phosphoserine is present on S3291. Basic and acidic residues-rich tracts occupy residues 3321–3333 (GDSD…RVEK), 3363–3375 (QGME…FSPI), and 3465–3477 (GYER…ERLQ). S3373 carries the phosphoserine modification. R3492 carries the omega-N-methylarginine modification. Basic and acidic residues-rich tracts occupy residues 3540 to 3551 (VQEHVKDGPRAH), 3583 to 3593 (WFDKPRDARSD), 3628 to 3647 (LWPH…EHRH), and 3657 to 3681 (HTGE…EARP). Residues 3703–3712 (AEYSQPSRAS) are compositionally biased toward polar residues. Low complexity predominate over residues 3741-3807 (PQAQPQLQGR…RLQQQSQPTT (67 aa)). The residue at position 3808 (R3808) is an Omega-N-methylarginine. 2 stretches are compositionally biased toward low complexity: residues 3849-3860 (AKAPQQGRAPQA) and 3882-3892 (GAPAGQPGADG).

As to quaternary structure, interacts with PCLO, ERC2/CAST1, RIMS1 and UNC13A. Interacts with TPRG1L. Interacts with DYNLL1 and DYNLL2; these interactions potentially link PTVs to dynein and myosin V motor complexes. Interacts with ATG5; this interaction is important for the regulation of presynaptic autophagy. Interacts (via C-terminus) with TRIO (via N-terminus). Interacts with CTBP1. Interacts with SIAH1; this interaction negatively regulates SIAH1 E3 ligase activity. Interacts (via coiled region) with DAO; the interaction is direct. Myristoylated. The N-terminal myristoylation is not sufficient for presynaptic localization. As to expression, exclusively expressed in brain.

It is found in the cytoplasm. The protein localises to the presynaptic active zone. Its subcellular location is the cytoskeleton. The protein resides in the cytoplasmic vesicle. It localises to the secretory vesicle. It is found in the synaptic vesicle membrane. Its function is as follows. Scaffold protein of the presynaptic cytomatrix at the active zone (CAZ) which is the place in the synapse where neurotransmitter is released. After synthesis, participates in the formation of Golgi-derived membranous organelles termed Piccolo-Bassoon transport vesicles (PTVs) that are transported along axons to sites of nascent synaptic contacts. At the presynaptic active zone, regulates the spatial organization of synaptic vesicle cluster, the protein complexes that execute membrane fusion and compensatory endocytosis. Also functions in processes other than assembly such as the regulation of specific presynaptic protein ubiquitination by interacting with SIAH1 or the regulation of presynaptic autophagy by associating with ATG5. Also mediates synapse to nucleus communication leading to reconfiguration of gene expression by associating with the transcriptional corepressor CTBP1 and by subsequently reducing the size of its pool available for nuclear import. Inhibits the activity of the proportion of DAO enzyme that localizes to the presynaptic active zone, which may modulate synaptic transmission. This is Protein bassoon from Homo sapiens (Human).